Reading from the N-terminus, the 331-residue chain is MAEADTERRPHIPVLLRPLLAAVAPVEGTWLDGTFGAGGYARGLLEAGADRVIGVDRDPLALEMASGWAGDYGDRLRLVAGTFSQLDSHAGAPLDGVVLDLGVSSMQLDLAERGFSFQKDGPLDMRMSQEGESAADLVNTASEETLADILYHYGEERASRRIARAIVEARAAAPITRTLALAEIVARCLPRPKPGQMHPATRSFQAIRIAVNAEFSELVEGLEAAERALRPGGRLAVVTFHSLEDRIVKRFLQLRSGGEGQGNRYAPETRADAPRFTLPLRRAISPDEAELAENPRARSARLRVGVRTDAPAGKVDPQALGTPLIPKKGRR.

Residues 38 to 40, Asp56, Phe83, Asp100, and Gln107 contribute to the S-adenosyl-L-methionine site; that span reads GGY. The interval 287-331 is disordered; that stretch reads DEAELAENPRARSARLRVGVRTDAPAGKVDPQALGTPLIPKKGRR.

The protein belongs to the methyltransferase superfamily. RsmH family.

Its subcellular location is the cytoplasm. It catalyses the reaction cytidine(1402) in 16S rRNA + S-adenosyl-L-methionine = N(4)-methylcytidine(1402) in 16S rRNA + S-adenosyl-L-homocysteine + H(+). Its function is as follows. Specifically methylates the N4 position of cytidine in position 1402 (C1402) of 16S rRNA. The polypeptide is Ribosomal RNA small subunit methyltransferase H (Cereibacter sphaeroides (strain KD131 / KCTC 12085) (Rhodobacter sphaeroides)).